Here is a 369-residue protein sequence, read N- to C-terminus: Phosphoribosyl pyrophosphate synthase-associated protein 2 (369 aa).

Methionine 1 is subject to N-acetylmethionine. Threonine 5 carries the phosphothreonine modification. 3 positions are modified to phosphoserine: serine 219, serine 227, and serine 233.

It belongs to the ribose-phosphate pyrophosphokinase family. In terms of assembly, binds to PRPS1 and PRPS2. Ubiquitous.

Functionally, seems to play a negative regulatory role in 5-phosphoribose 1-diphosphate synthesis. This chain is Phosphoribosyl pyrophosphate synthase-associated protein 2 (PRPSAP2), found in Homo sapiens (Human).